A 185-amino-acid chain; its full sequence is UPF0301 protein IL2218 (185 aa).

It belongs to the UPF0301 (AlgH) family.

The chain is UPF0301 protein IL2218 from Idiomarina loihiensis (strain ATCC BAA-735 / DSM 15497 / L2-TR).